The sequence spans 301 residues: 2-(hydroxymethyl)glutarate dehydrogenase (301 aa).

NAD(+) is bound by residues 8–22 (GFIG…MAIN) and S99. The active site involves K174. Position 243 (K243) interacts with NAD(+).

Belongs to the HIBADH-related family. As to quaternary structure, homotetramer.

The enzyme catalyses (S)-2-hydroxymethylglutarate + NAD(+) = 2-formylglutarate + NADH + H(+). It participates in cofactor degradation; nicotinate degradation; propanoate and pyruvate from 6-hydroxynicotinate: step 3/8. Functionally, catalyzes the conversion of 2-formylglutarate to (S)-2-hydroxymethylglutarate. Has very low activity with (S)-3-hydroxyisobutyrate. This is 2-(hydroxymethyl)glutarate dehydrogenase from Eubacterium barkeri (Clostridium barkeri).